The primary structure comprises 308 residues: MDRLDLTNASKLQERINQIDSSHFYSALTYYSWSFYGLNISYQFHEKGISFFGEINLEKNLLHEVLQDKYCPTQKVIFAPITKPNQPDDFLDLIKGQIEQLDNLQAIYIDDLTGIELEWVKSKYDVEIIHESSTNFLYETKKIMTLSGKSLQKKRNHLNFFIKQYEKDAKIKINREVDLNQLEKFYLTWINDCEDPSAYQSELALFRAIKPLIQDGSLKLTALYYLDQIIGFCVSYSLNNRCEIFIEHCDETYRGSYQYLLSNSLRIHHSNDALTDRQDDMGSASISYSKLSYKPEFIIKRYLVKVIC.

This is an uncharacterized protein from Mycoplasmoides gallisepticum (strain R(low / passage 15 / clone 2)) (Mycoplasma gallisepticum).